Here is a 122-residue protein sequence, read N- to C-terminus: Large ribosomal subunit protein uL14c (122 aa).

This sequence belongs to the universal ribosomal protein uL14 family. As to quaternary structure, part of the 50S ribosomal subunit.

Its subcellular location is the plastid. It is found in the chloroplast. In terms of biological role, binds to 23S rRNA. This Stigeoclonium helveticum (Green alga) protein is Large ribosomal subunit protein uL14c.